We begin with the raw amino-acid sequence, 442 residues long: MSNFIRRLVGKMKAISTGTNAIVSKKDSIYANWSKEQLIRRITELENANKPHSEKFQHIEDNKKRKISQEEVTRSKAKKAPKKFDFSKHNTRFIALRFAYLGWNYNGLAVQKEYTPLPTVEGTILEAMNKCKLVPSMVLQDYKFSRCGRTDKGVSAMNQVISLEVRSNLTDEEQRDPTNDSREIPYVHVLNQLLPDDIRISAVCLRPPPNFDARFSCVHRHYKYIFNGKNLNIEKMSKAASYFVGERDFRNFCKLDGSKQITNFKRTIISSKILPLSETFYCFDLVGSAFLWHQVRCMMAILFLVGQSLEVPEIVLRLTDIEKTPQRPVYEMANDIPLLLYDCKFPEMDWQEPTVDDYKAIKFTTATEALTLHYELKAAVCNIFKDVLPTANTNNFSKTIINLGDGRGKVVGTYVKLEDRSVMEPVEVVNAKYSKKKNNKNK.

Asp-151 functions as the Nucleophile in the catalytic mechanism. Tyr-222 serves as a coordination point for substrate.

Belongs to the tRNA pseudouridine synthase TruA family.

Its subcellular location is the nucleus. It carries out the reaction uridine(38/39) in tRNA = pseudouridine(38/39) in tRNA. Functionally, formation of pseudouridines at positions 38 and 39 in the anticodon stem and loop of transfer RNAs. This is tRNA pseudouridine(38/39) synthase (DEG1) from Saccharomyces cerevisiae (strain ATCC 204508 / S288c) (Baker's yeast).